A 370-amino-acid polypeptide reads, in one-letter code: Tryptophan--tRNA ligase (370 aa).

Residues 75-83 (PSGKMHFGH) carry the 'HIGH' region motif. The 'KMSKS' region motif lies at 255–259 (KMSSS).

The protein belongs to the class-I aminoacyl-tRNA synthetase family.

The protein localises to the cytoplasm. The enzyme catalyses tRNA(Trp) + L-tryptophan + ATP = L-tryptophyl-tRNA(Trp) + AMP + diphosphate + H(+). This is Tryptophan--tRNA ligase from Methanocaldococcus jannaschii (strain ATCC 43067 / DSM 2661 / JAL-1 / JCM 10045 / NBRC 100440) (Methanococcus jannaschii).